We begin with the raw amino-acid sequence, 252 residues long: Pyrroloquinoline-quinone synthase (252 aa).

This sequence belongs to the PqqC family.

It catalyses the reaction 6-(2-amino-2-carboxyethyl)-7,8-dioxo-1,2,3,4,7,8-hexahydroquinoline-2,4-dicarboxylate + 3 O2 = pyrroloquinoline quinone + 2 H2O2 + 2 H2O + H(+). It participates in cofactor biosynthesis; pyrroloquinoline quinone biosynthesis. Functionally, ring cyclization and eight-electron oxidation of 3a-(2-amino-2-carboxyethyl)-4,5-dioxo-4,5,6,7,8,9-hexahydroquinoline-7,9-dicarboxylic-acid to PQQ. The polypeptide is Pyrroloquinoline-quinone synthase (Acinetobacter baumannii (strain ACICU)).